Consider the following 339-residue polypeptide: Phenylalanine--tRNA ligase alpha subunit (339 aa).

Over residues 1–14 (MEAKLKQLEEKAKQ) the composition is skewed to basic and acidic residues. Residues 1–20 (MEAKLKQLEEKAKQDIQAST) are disordered. Glu-254 provides a ligand contact to Mg(2+).

It belongs to the class-II aminoacyl-tRNA synthetase family. Phe-tRNA synthetase alpha subunit type 1 subfamily. Tetramer of two alpha and two beta subunits. The cofactor is Mg(2+).

The protein resides in the cytoplasm. It catalyses the reaction tRNA(Phe) + L-phenylalanine + ATP = L-phenylalanyl-tRNA(Phe) + AMP + diphosphate + H(+). This Alkaliphilus metalliredigens (strain QYMF) protein is Phenylalanine--tRNA ligase alpha subunit.